Consider the following 325-residue polypeptide: NADH-quinone oxidoreductase subunit H (325 aa).

8 helical membrane-spanning segments follow: residues 11–31 (ILLSILKAVVILLVVVTCGAF), 81–101 (VIFTLAPMIAFTSLLLAFAIV), 114–134 (IGILFFLMMAGLAVYAVLFAG), 154–174 (LSYEVFLGLSLMGVVAQAGSF), 186–206 (IWNVIPQFFGFVTFAIAGVAV), 237–257 (FFVGEYIGIVTISALMVTLFF), 265–285 (LPPFIWFALKTAFFMMMFILI), and 304–324 (VCLPLTLVNLLVTAAVILWQA).

It belongs to the complex I subunit 1 family. As to quaternary structure, NDH-1 is composed of 13 different subunits. Subunits NuoA, H, J, K, L, M, N constitute the membrane sector of the complex.

It is found in the cell inner membrane. It catalyses the reaction a quinone + NADH + 5 H(+)(in) = a quinol + NAD(+) + 4 H(+)(out). NDH-1 shuttles electrons from NADH, via FMN and iron-sulfur (Fe-S) centers, to quinones in the respiratory chain. The immediate electron acceptor for the enzyme in this species is believed to be ubiquinone. Couples the redox reaction to proton translocation (for every two electrons transferred, four hydrogen ions are translocated across the cytoplasmic membrane), and thus conserves the redox energy in a proton gradient. This subunit may bind ubiquinone. The chain is NADH-quinone oxidoreductase subunit H from Enterobacter sp. (strain 638).